Consider the following 748-residue polypeptide: MASSRCPAPRGCRCLPGASLAWLGTVLLFLADWVLLRTALPRIFSLLVPTALPLLRVWAVGLSRWAVLWLGACGVLRATVGSKSENAGAQGWLAALEPLAAALGLALPGLALFRELISWGAPGSADSTRLLHWGSHPSAFVVSYAAALPAAALWHKLGSLWVPGGQGGSGNPVRRLLGCLGSETRRLSLFLVLVVLSSLGEMAIPFFTGRLTDWILQDGSADTFTRNLTLMSILTIASAVLEFVGDGIYNNTMGHVHSHLQGEVFGAVLRQETEFFQQNQTGNITSRVTEDTSTLSDSLSENLSLFLWYLVRGLCLLGIMLWGSVSLTMVTLVTLPLLFLLPKKVGKWYQLLEVQVRESLAKSSQVAIEALSAMPTVRSFANEEGEAQKFREKLQEIKTLNQKEAVAYAVNSWTTSISGMLLKVGILYIGGQLVTSGAVSSGNLVTFVLYQMQFTQAVEVLLSIYPRVQKAVGSSEKIFEYLDRTPRCPPSGLLTPLHLEGLVQFQDVSFAYPNRPDVLVLQGLTFTLHPGEVTALVGPNGSGKSTVAALLQNLYQPTGGQLLLDGKPLPQYEHRYLHRQVAAVGQEPQVFGRSLQENIAYGLTQKPTMEEITAAAVKCGAHSFISGLPQGYDTEVGEAGSQLSGGQRQAVALARALIRKPCVLILDDATSALDANSQLQVEQLLYESPERYSRSVLLITQHLSLVEQADHILFLEGGAIREGGTHQQLMEKKGCYWAMVQAPADAPE.

The Cytoplasmic segment spans residues 1-15 (MASSRCPAPRGCRCL). The helical transmembrane segment at 16-36 (PGASLAWLGTVLLFLADWVLL) threads the bilayer. The Lumenal segment spans residues 37 to 53 (RTALPRIFSLLVPTALP). Residues 54–76 (LLRVWAVGLSRWAVLWLGACGVL) form a helical membrane-spanning segment. Over 77–92 (RATVGSKSENAGAQGW) the chain is Cytoplasmic. A helical membrane pass occupies residues 93 to 113 (LAALEPLAAALGLALPGLALF). Residues 114–133 (RELISWGAPGSADSTRLLHW) lie on the Lumenal side of the membrane. The helical transmembrane segment at 134 to 154 (GSHPSAFVVSYAAALPAAALW) threads the bilayer. At 155-186 (HKLGSLWVPGGQGGSGNPVRRLLGCLGSETRR) the chain is on the cytoplasmic side. The helical transmembrane segment at 187-207 (LSLFLVLVVLSSLGEMAIPFF) threads the bilayer. The ABC transmembrane type-1 domain occupies 187 to 470 (LSLFLVLVVL…LLSIYPRVQK (284 aa)). Residues 208 to 227 (TGRLTDWILQDGSADTFTRN) lie on the Lumenal side of the membrane. A helical transmembrane segment spans residues 228-248 (LTLMSILTIASAVLEFVGDGI). Topologically, residues 249 to 298 (YNNTMGHVHSHLQGEVFGAVLRQETEFFQQNQTGNITSRVTEDTSTLSDS) are cytoplasmic. A helical transmembrane segment spans residues 299–319 (LSENLSLFLWYLVRGLCLLGI). The Lumenal portion of the chain corresponds to 320-328 (MLWGSVSLT). Residues 329-349 (MVTLVTLPLLFLLPKKVGKWY) traverse the membrane as a helical segment. Topologically, residues 350–418 (QLLEVQVRES…AVNSWTTSIS (69 aa)) are cytoplasmic. Positions 375–420 (PTVRSFANEEGEAQKFREKLQEIKTLNQKEAVAYAVNSWTTSISGM) are part of the peptide-binding site. Residues 419 to 439 (GMLLKVGILYIGGQLVTSGAV) traverse the membrane as a helical segment. The Lumenal portion of the chain corresponds to 440–443 (SSGN). A helical membrane pass occupies residues 444–464 (LVTFVLYQMQFTQAVEVLLSI). The interval 453–487 (QFTQAVEVLLSIYPRVQKAVGSSEKIFEYLDRTPR) is part of the peptide-binding site. The Cytoplasmic segment spans residues 465 to 748 (YPRVQKAVGS…MVQAPADAPE (284 aa)). The region spanning 503–742 (VQFQDVSFAY…KGCYWAMVQA (240 aa)) is the ABC transporter domain. ATP is bound by residues 538–546 (GPNGSGKST), 641–647 (SQLSGGQ), and Gln701. Residue Ser545 coordinates Mg(2+).

Belongs to the ABC transporter superfamily. ABCB family. MHC peptide exporter (TC 3.A.1.209) subfamily. Heterodimer of TAP1 and TAP2 (TAP1-TAP2). A component of the peptide loading complex (PLC), interacts via TAPBP with MHCI heterodimer; this interaction mediates peptide-MHCI assembly. Interacts with PSMB5 and PSMB8. Requires Mg(2+) as cofactor.

It is found in the endoplasmic reticulum membrane. It catalyses the reaction a peptide antigen(in) + ATP + H2O = a peptide antigen(out) + ADP + phosphate + H(+). ABC transporter associated with antigen processing. In complex with TAP2 mediates unidirectional translocation of peptide antigens from cytosol to endoplasmic reticulum (ER) for loading onto MHC class I (MHCI) molecules. Uses the chemical energy of ATP to export peptides against the concentration gradient. During the transport cycle alternates between 'inward-facing' state with peptide binding site facing the cytosol to 'outward-facing' state with peptide binding site facing the ER lumen. Peptide antigen binding to ATP-loaded TAP1-TAP2 induces a switch to hydrolysis-competent 'outward-facing' conformation ready for peptide loading onto nascent MHCI molecules. Subsequently ATP hydrolysis resets the transporter to the 'inward facing' state for a new cycle. As a component of the peptide loading complex (PLC), acts as a molecular scaffold essential for peptide-MHCI assembly and antigen presentation. This Gorilla gorilla gorilla (Western lowland gorilla) protein is Antigen peptide transporter 1 (TAP1).